The primary structure comprises 222 residues: Ribose-5-phosphate isomerase A (222 aa).

Substrate is bound by residues Thr28–Thr31, Asp81–Asp84, and Lys94–Gly97. The active-site Proton acceptor is Glu103. Position 121 (Lys121) interacts with substrate.

Belongs to the ribose 5-phosphate isomerase family. As to quaternary structure, homodimer.

It catalyses the reaction aldehydo-D-ribose 5-phosphate = D-ribulose 5-phosphate. The protein operates within carbohydrate degradation; pentose phosphate pathway; D-ribose 5-phosphate from D-ribulose 5-phosphate (non-oxidative stage): step 1/1. Functionally, catalyzes the reversible conversion of ribose-5-phosphate to ribulose 5-phosphate. The chain is Ribose-5-phosphate isomerase A from Azoarcus sp. (strain BH72).